We begin with the raw amino-acid sequence, 137 residues long: Ribosomal RNA large subunit methyltransferase H (137 aa).

Residues Leu56, Gly85, and 104 to 109 (LSPLTF) contribute to the S-adenosyl-L-methionine site.

Belongs to the RNA methyltransferase RlmH family. In terms of assembly, homodimer.

The protein resides in the cytoplasm. It carries out the reaction pseudouridine(1915) in 23S rRNA + S-adenosyl-L-methionine = N(3)-methylpseudouridine(1915) in 23S rRNA + S-adenosyl-L-homocysteine + H(+). Functionally, specifically methylates the pseudouridine at position 1915 (m3Psi1915) in 23S rRNA. This is Ribosomal RNA large subunit methyltransferase H from Prochlorococcus marinus (strain MIT 9515).